The chain runs to 381 residues: Succinate--CoA ligase [ADP-forming] subunit beta (381 aa).

The region spanning 9 to 236 is the ATP-grasp domain; sequence KELLRVAGVP…ESSEAPSEVD (228 aa). ATP is bound by residues K45, 52-54, A94, and E99; that span reads GRG. 2 residues coordinate Mg(2+): N191 and D205. Substrate contacts are provided by residues N256 and 313–315; that span reads GIT.

The protein belongs to the succinate/malate CoA ligase beta subunit family. In terms of assembly, heterotetramer of two alpha and two beta subunits. The cofactor is Mg(2+).

It catalyses the reaction succinate + ATP + CoA = succinyl-CoA + ADP + phosphate. The enzyme catalyses GTP + succinate + CoA = succinyl-CoA + GDP + phosphate. The protein operates within carbohydrate metabolism; tricarboxylic acid cycle; succinate from succinyl-CoA (ligase route): step 1/1. Its function is as follows. Succinyl-CoA synthetase functions in the citric acid cycle (TCA), coupling the hydrolysis of succinyl-CoA to the synthesis of either ATP or GTP and thus represents the only step of substrate-level phosphorylation in the TCA. The beta subunit provides nucleotide specificity of the enzyme and binds the substrate succinate, while the binding sites for coenzyme A and phosphate are found in the alpha subunit. This Gemmatimonas aurantiaca (strain DSM 14586 / JCM 11422 / NBRC 100505 / T-27) protein is Succinate--CoA ligase [ADP-forming] subunit beta.